Here is a 200-residue protein sequence, read N- to C-terminus: Transcriptional repressor NrdR (200 aa).

A zinc finger lies at 3–34 (CPRCGKQEIRVLESRSAEGGQSVRRRRECMSC). Positions 49–139 (IMVIKRDGSR…VYRKFQGIKD (91 aa)) constitute an ATP-cone domain. Positions 158–200 (LERPLRNSPPSESESTASPDWVGGIPQLLDQNDTSSNLSEIPK) are disordered. Over residues 186–200 (LDQNDTSSNLSEIPK) the composition is skewed to polar residues.

This sequence belongs to the NrdR family. Requires Zn(2+) as cofactor.

In terms of biological role, negatively regulates transcription of bacterial ribonucleotide reductase nrd genes and operons by binding to NrdR-boxes. This chain is Transcriptional repressor NrdR, found in Synechococcus sp. (strain JA-3-3Ab) (Cyanobacteria bacterium Yellowstone A-Prime).